The sequence spans 1012 residues: Structural polyprotein (1012 aa).

An a divalent metal cation-binding site is contributed by Asp-30. The Peptidase S50 domain occupies 513–755 (ADKGYEVVAN…AGRQYHLAMA (243 aa)). Residue Ser-652 is the Nucleophile of the active site. Lys-692 is an active-site residue. The disordered stretch occupies residues 970-1012 (MEMKHRNPRRALPKPKPKPNAPTQRPPGRLGRWIRTVSDEDLE). A compositionally biased stretch (basic residues) spans 975 to 986 (RNPRRALPKPKP). The segment at 1003 to 1012 (IRTVSDEDLE) is interaction with VP1 protein.

As to quaternary structure, homotrimer. A central divalent metal stabilizes the VP2 trimer. Interacts with host ITGA4/ITGB1. Homodimer. Interacts (via C-terminus) with VP1 in the cytoplasm. Interacts with VP2. In terms of processing, specific enzymatic cleavages yield mature proteins. The capsid assembly seems to be regulated by polyprotein processing. The protease VP4 cleaves itself off the polyprotein, thus releasing pre-VP2 and VP3 within the infected cell. During capsid assembly, the C-terminus of pre-VP2 is further processed by VP4, giving rise to VP2, the external capsid protein and three small peptides that all stay closely associated with the capsid.

Its subcellular location is the virion. The protein resides in the host cytoplasm. Its function is as follows. Capsid protein VP2 self assembles to form an icosahedral capsid with a T=13 symmetry, about 70 nm in diameter, and consisting of 260 VP2 trimers. The capsid encapsulates the genomic dsRNA. VP2 is also involved in attachment and entry into the host cell by interacting with host ITGA4/ITGB1. In terms of biological role, the precursor of VP2 plays an important role in capsid assembly. First, pre-VP2 and VP2 oligomers assemble to form a procapsid. Then, the pre-VP2 intermediates may be processed into VP2 proteins by proteolytic cleavage mediated by VP4 to obtain the mature virion. The final capsid is composed of pentamers and hexamers but VP2 has a natural tendency to assemble into all-pentameric structures. Therefore pre-VP2 may be required to allow formation of the hexameric structures. Functionally, protease VP4 is a serine protease that cleaves the polyprotein into its final products. Pre-VP2 is first partially cleaved, and may be completely processed by VP4 upon capsid maturation. Capsid protein VP3 plays a key role in virion assembly by providing a scaffold for the capsid made of VP2. May self-assemble to form a T=4-like icosahedral inner-capsid composed of at least 180 trimers. Plays a role in genomic RNA packaging by recruiting VP1 into the capsid and interacting with the dsRNA genome segments to form a ribonucleoprotein complex. Additionally, the interaction of the VP3 C-terminal tail with VP1 removes the inherent structural blockade of the polymerase active site. Thus, VP3 can also function as a transcriptional activator. Its function is as follows. Structural peptide 1 is a small peptide derived from pre-VP2 C-terminus. It destabilizes and perforates cell membranes, suggesting a role during entry. In terms of biological role, structural peptide 2 is a small peptide derived from pVP2 C-terminus. It is not essential for the virus viability, but viral growth is affected when missing. Functionally, structural peptide 3 is a small peptide derived from pVP2 C-terminus. It is not essential for the virus viability, but viral growth is affected when missing. Structural peptide 4 is a small peptide derived from pVP2 C-terminus. It is essential for the virus viability. The protein is Structural polyprotein of Avian infectious bursal disease virus (strain Chicken/Cuba/Soroa/1998) (IBDV).